Here is a 346-residue protein sequence, read N- to C-terminus: MLNVAVVGASGYTGVELLRLLYCHPEVAVTCITSEQSAGRPVAAVFPTLRSRYTQVLENLEPVKVAQKADLIFTALPHKAAMEVVPTFLELGKRVVDLSADYRFNDPAVYEKWYEPHMNPENLKEAVYGLPEIRREKIGDAWLVGNPGCYPTSVILGLMPLLKKRLIDPSTIIADSKSGVSGAGRGAKVENLYCEVNDGFKAYGVGGVHRHIPEIEQELSLLAGGPITITFTPHLVPMDRGILSTIYARLTGTDSVAELVKLYAEFYEGEPFVRVLPAGNVPSTAHVRGSNFCDIGLAVDSRTGRVIVVSAIDNLVKGAAGQAVQNMNIMYGFPETMGLEGLPLFP.

Residue C149 is part of the active site.

It belongs to the NAGSA dehydrogenase family. Type 1 subfamily.

The protein localises to the cytoplasm. The enzyme catalyses N-acetyl-L-glutamate 5-semialdehyde + phosphate + NADP(+) = N-acetyl-L-glutamyl 5-phosphate + NADPH + H(+). It participates in amino-acid biosynthesis; L-arginine biosynthesis; N(2)-acetyl-L-ornithine from L-glutamate: step 3/4. Its function is as follows. Catalyzes the NADPH-dependent reduction of N-acetyl-5-glutamyl phosphate to yield N-acetyl-L-glutamate 5-semialdehyde. The polypeptide is N-acetyl-gamma-glutamyl-phosphate reductase (Geobacter metallireducens (strain ATCC 53774 / DSM 7210 / GS-15)).